A 643-amino-acid polypeptide reads, in one-letter code: Phosphomethylpyrimidine synthase (643 aa).

Substrate contacts are provided by residues Asn-248, Met-277, Tyr-306, His-342, 362 to 364 (SRG), 403 to 406 (DGLR), and Glu-442. Residue His-446 participates in Zn(2+) binding. Tyr-469 is a substrate binding site. Zn(2+) is bound at residue His-510. Residues Cys-590, Cys-593, and Cys-598 each contribute to the [4Fe-4S] cluster site.

This sequence belongs to the ThiC family. In terms of assembly, homodimer. [4Fe-4S] cluster serves as cofactor.

The enzyme catalyses 5-amino-1-(5-phospho-beta-D-ribosyl)imidazole + S-adenosyl-L-methionine = 4-amino-2-methyl-5-(phosphooxymethyl)pyrimidine + CO + 5'-deoxyadenosine + formate + L-methionine + 3 H(+). The protein operates within cofactor biosynthesis; thiamine diphosphate biosynthesis. In terms of biological role, catalyzes the synthesis of the hydroxymethylpyrimidine phosphate (HMP-P) moiety of thiamine from aminoimidazole ribotide (AIR) in a radical S-adenosyl-L-methionine (SAM)-dependent reaction. The protein is Phosphomethylpyrimidine synthase of Paraburkholderia phymatum (strain DSM 17167 / CIP 108236 / LMG 21445 / STM815) (Burkholderia phymatum).